The sequence spans 346 residues: NADH-ubiquinone oxidoreductase chain 2 (346 aa).

The next 11 membrane-spanning stretches (helical) occupy residues 1-21 (MSPY…MLIS), 26-46 (WVFM…ILVW), 60-80 (FIVQ…SLSG), 96-116 (MMIM…YWVV), 122-142 (LNYI…LAVL), 151-171 (SSML…GGLG), 178-198 (LLAF…VAGS), 199-219 (LLGL…FSIL), 242-262 (VLLG…GFFG), 274-294 (LLLG…FYYL), and 320-340 (LSGL…LVGG).

Belongs to the complex I subunit 2 family.

Its subcellular location is the mitochondrion inner membrane. The enzyme catalyses a ubiquinone + NADH + 5 H(+)(in) = a ubiquinol + NAD(+) + 4 H(+)(out). Its function is as follows. Core subunit of the mitochondrial membrane respiratory chain NADH dehydrogenase (Complex I) that is believed to belong to the minimal assembly required for catalysis. Complex I functions in the transfer of electrons from NADH to the respiratory chain. The immediate electron acceptor for the enzyme is believed to be ubiquinone. The protein is NADH-ubiquinone oxidoreductase chain 2 (ND2) of Branchiostoma floridae (Florida lancelet).